A 95-amino-acid chain; its full sequence is Aspartyl/glutamyl-tRNA(Asn/Gln) amidotransferase subunit C (95 aa).

This sequence belongs to the GatC family. In terms of assembly, heterotrimer of A, B and C subunits.

The catalysed reaction is L-glutamyl-tRNA(Gln) + L-glutamine + ATP + H2O = L-glutaminyl-tRNA(Gln) + L-glutamate + ADP + phosphate + H(+). The enzyme catalyses L-aspartyl-tRNA(Asn) + L-glutamine + ATP + H2O = L-asparaginyl-tRNA(Asn) + L-glutamate + ADP + phosphate + 2 H(+). In terms of biological role, allows the formation of correctly charged Asn-tRNA(Asn) or Gln-tRNA(Gln) through the transamidation of misacylated Asp-tRNA(Asn) or Glu-tRNA(Gln) in organisms which lack either or both of asparaginyl-tRNA or glutaminyl-tRNA synthetases. The reaction takes place in the presence of glutamine and ATP through an activated phospho-Asp-tRNA(Asn) or phospho-Glu-tRNA(Gln). In Sinorhizobium fredii (strain NBRC 101917 / NGR234), this protein is Aspartyl/glutamyl-tRNA(Asn/Gln) amidotransferase subunit C.